The chain runs to 559 residues: Small ribosomal subunit protein uS3m (559 aa).

Residues 113–134 (EGTEEERNEVRGRGAGKRVESI) are disordered. Residues 120 to 134 (NEVRGRGAGKRVESI) are compositionally biased toward basic and acidic residues.

It belongs to the universal ribosomal protein uS3 family.

The protein localises to the mitochondrion. The chain is Small ribosomal subunit protein uS3m (RPS3) from Zea mays (Maize).